The sequence spans 206 residues: Large ribosomal subunit protein uL4 (206 aa).

The tract at residues 51-96 (LTRAEVKHSTKKPFRQKGTGNARAGMTSTPNRRGGGRAFPNKPDEN) is disordered.

It belongs to the universal ribosomal protein uL4 family. Part of the 50S ribosomal subunit.

Its function is as follows. One of the primary rRNA binding proteins, this protein initially binds near the 5'-end of the 23S rRNA. It is important during the early stages of 50S assembly. It makes multiple contacts with different domains of the 23S rRNA in the assembled 50S subunit and ribosome. Forms part of the polypeptide exit tunnel. The polypeptide is Large ribosomal subunit protein uL4 (Chromobacterium violaceum (strain ATCC 12472 / DSM 30191 / JCM 1249 / CCUG 213 / NBRC 12614 / NCIMB 9131 / NCTC 9757 / MK)).